We begin with the raw amino-acid sequence, 240 residues long: Uridylate kinase (240 aa).

ATP is bound by residues 15–18 (KISG), G58, and R62. UMP is bound by residues D77 and 138 to 145 (TGNPLFTT). T165, Y171, and D174 together coordinate ATP.

Belongs to the UMP kinase family. As to quaternary structure, homohexamer.

Its subcellular location is the cytoplasm. It carries out the reaction UMP + ATP = UDP + ADP. The protein operates within pyrimidine metabolism; CTP biosynthesis via de novo pathway; UDP from UMP (UMPK route): step 1/1. Its activity is regulated as follows. Inhibited by UTP. Functionally, catalyzes the reversible phosphorylation of UMP to UDP. The protein is Uridylate kinase of Buchnera aphidicola subsp. Schizaphis graminum (strain Sg).